Reading from the N-terminus, the 197-residue chain is MVTIEDKINLFSKIIYGEVDDKINSELDELENVEKDTIEKEEREVKKYRNKNMQSVEKKIKSKFEKEVFKLKLEEQQQLLNLKENMINETLESLKERIIDFTKSDEYINYIKSHLDNTLKDIENKEGIIIYFNKKDLEKFKKVINKDNVEVSNESKDIIGGYIIQDKNNKFRVDCSLEISIEECKEKIGISITELFM.

Belongs to the V-ATPase E subunit family.

Its function is as follows. Produces ATP from ADP in the presence of a proton gradient across the membrane. The sequence is that of V-type ATP synthase subunit E 2 from Clostridium tetani (strain Massachusetts / E88).